A 338-amino-acid polypeptide reads, in one-letter code: Lipoate-protein ligase A (338 aa).

The 188-residue stretch at 29-216 (PATQRVLFLW…AFFAHYGERV (188 aa)) folds into the BPL/LPL catalytic domain. ATP-binding positions include arginine 71, 76–79 (GAVF), and lysine 134. Lysine 134 contributes to the (R)-lipoate binding site.

Belongs to the LplA family. In terms of assembly, monomer.

The protein localises to the cytoplasm. It catalyses the reaction L-lysyl-[lipoyl-carrier protein] + (R)-lipoate + ATP = N(6)-[(R)-lipoyl]-L-lysyl-[lipoyl-carrier protein] + AMP + diphosphate + H(+). Its pathway is protein modification; protein lipoylation via exogenous pathway; protein N(6)-(lipoyl)lysine from lipoate: step 1/2. The protein operates within protein modification; protein lipoylation via exogenous pathway; protein N(6)-(lipoyl)lysine from lipoate: step 2/2. Catalyzes both the ATP-dependent activation of exogenously supplied lipoate to lipoyl-AMP and the transfer of the activated lipoyl onto the lipoyl domains of lipoate-dependent enzymes. In Salmonella paratyphi C (strain RKS4594), this protein is Lipoate-protein ligase A.